The sequence spans 214 residues: MKPPALTPRLLLRAYALGIFPMAESRDDPEIHWIDPRHRGIFPLDGFHISRSLARRIRRMDWRVSVDEDFAATVEACADREETWINPTIFRLYVELHALGHAHSLEVREGETLVGGVYGVTLGRAFFGESMFSHRTDASKVALAFLIDRLRAGGFTLFDTQFLTPHLASLGAIEIRRSDYHQRLTEALEGNASFTPEGYWADPASVVQRNSQTS.

The protein belongs to the L/F-transferase family.

Its subcellular location is the cytoplasm. The enzyme catalyses N-terminal L-lysyl-[protein] + L-leucyl-tRNA(Leu) = N-terminal L-leucyl-L-lysyl-[protein] + tRNA(Leu) + H(+). It catalyses the reaction N-terminal L-arginyl-[protein] + L-leucyl-tRNA(Leu) = N-terminal L-leucyl-L-arginyl-[protein] + tRNA(Leu) + H(+). The catalysed reaction is L-phenylalanyl-tRNA(Phe) + an N-terminal L-alpha-aminoacyl-[protein] = an N-terminal L-phenylalanyl-L-alpha-aminoacyl-[protein] + tRNA(Phe). Its function is as follows. Functions in the N-end rule pathway of protein degradation where it conjugates Leu, Phe and, less efficiently, Met from aminoacyl-tRNAs to the N-termini of proteins containing an N-terminal arginine or lysine. The chain is Leucyl/phenylalanyl-tRNA--protein transferase from Cereibacter sphaeroides (strain ATCC 17023 / DSM 158 / JCM 6121 / CCUG 31486 / LMG 2827 / NBRC 12203 / NCIMB 8253 / ATH 2.4.1.) (Rhodobacter sphaeroides).